The primary structure comprises 424 residues: Histidine--tRNA ligase (424 aa).

Belongs to the class-II aminoacyl-tRNA synthetase family. As to quaternary structure, homodimer.

The protein localises to the cytoplasm. The enzyme catalyses tRNA(His) + L-histidine + ATP = L-histidyl-tRNA(His) + AMP + diphosphate + H(+). This chain is Histidine--tRNA ligase, found in Salmonella paratyphi A (strain ATCC 9150 / SARB42).